Consider the following 37-residue polypeptide: Cytochrome b6-f complex subunit 5 (37 aa).

The chain crosses the membrane as a helical span at residues 5-25 (LLCGIVLGLIPITLAGLFMAA).

Belongs to the PetG family. The 4 large subunits of the cytochrome b6-f complex are cytochrome b6, subunit IV (17 kDa polypeptide, PetD), cytochrome f and the Rieske protein, while the 4 small subunits are PetG, PetL, PetM and PetN. The complex functions as a dimer.

The protein localises to the cellular thylakoid membrane. In terms of biological role, component of the cytochrome b6-f complex, which mediates electron transfer between photosystem II (PSII) and photosystem I (PSI), cyclic electron flow around PSI, and state transitions. PetG is required for either the stability or assembly of the cytochrome b6-f complex. The sequence is that of Cytochrome b6-f complex subunit 5 from Synechococcus elongatus (strain ATCC 33912 / PCC 7942 / FACHB-805) (Anacystis nidulans R2).